The following is a 400-amino-acid chain: Tryptophan synthase beta chain (400 aa).

At Lys-91 the chain carries N6-(pyridoxal phosphate)lysine.

Belongs to the TrpB family. As to quaternary structure, tetramer of two alpha and two beta chains. Requires pyridoxal 5'-phosphate as cofactor.

The enzyme catalyses (1S,2R)-1-C-(indol-3-yl)glycerol 3-phosphate + L-serine = D-glyceraldehyde 3-phosphate + L-tryptophan + H2O. It participates in amino-acid biosynthesis; L-tryptophan biosynthesis; L-tryptophan from chorismate: step 5/5. In terms of biological role, the beta subunit is responsible for the synthesis of L-tryptophan from indole and L-serine. The chain is Tryptophan synthase beta chain from Listeria monocytogenes serotype 4a (strain HCC23).